The sequence spans 508 residues: Protein FAM227B (508 aa).

Disordered stretches follow at residues 1–22 (MAGQ…MQEP) and 485–508 (ASLS…EEEY). Low complexity predominate over residues 486 to 497 (SLSSSSSSSPSS).

This sequence belongs to the FAM227 family.

This chain is Protein FAM227B (FAM227B), found in Homo sapiens (Human).